The sequence spans 118 residues: UPF0102 protein RSal33209_1090 (118 aa).

It belongs to the UPF0102 family.

This Renibacterium salmoninarum (strain ATCC 33209 / DSM 20767 / JCM 11484 / NBRC 15589 / NCIMB 2235) protein is UPF0102 protein RSal33209_1090.